The chain runs to 554 residues: Hydroxylamine reductase (554 aa).

The [2Fe-2S] cluster site is built by Cys-3, Cys-6, Cys-18, and Cys-25. 8 residues coordinate hybrid [4Fe-2O-2S] cluster: His-252, Glu-276, Cys-320, Cys-408, Cys-436, Cys-461, Glu-495, and Lys-497. At Cys-408 the chain carries Cysteine persulfide.

The protein belongs to the HCP family. Requires [2Fe-2S] cluster as cofactor. Hybrid [4Fe-2O-2S] cluster serves as cofactor.

It is found in the cytoplasm. The enzyme catalyses A + NH4(+) + H2O = hydroxylamine + AH2 + H(+). Functionally, catalyzes the reduction of hydroxylamine to form NH(3) and H(2)O. This chain is Hydroxylamine reductase, found in Shewanella sp. (strain MR-7).